The chain runs to 836 residues: Neuroligin-2 (836 aa).

An N-terminal signal peptide occupies residues 1–14; the sequence is MWLLALCLVGLAGA. The Extracellular segment spans residues 15–678; that stretch reads QRGGGGPGGG…DSRDYSTELS (664 aa). N-linked (GlcNAc...) asparagine glycosylation is found at asparagine 98 and asparagine 136. 3 cysteine pairs are disulfide-bonded: cysteine 106–cysteine 141, cysteine 317–cysteine 328, and cysteine 487–cysteine 521. The N-linked (GlcNAc...) asparagine glycan is linked to asparagine 522. The segment at 623 to 661 is disordered; it reads PPYATRWPPRTPGPGTSGTRRPPPPATLPPESDIDLGPR. A helical transmembrane segment spans residues 679 to 699; it reads VTVAVGASLLFLNILAFAALY. Residues 679-699 form a required for interaction with LHFPL4 region; the sequence is VTVAVGASLLFLNILAFAALY. Over 700-836 the chain is Cytoplasmic; that stretch reads YKRDRRQELR…LPHPHSTTRV (137 aa). Disordered regions lie at residues 711–735 and 791–836; these read RRLSPPGGSGSGVPGGGPLLPTAGR and LLPS…TTRV. A phosphoserine mark is found at serine 714 and serine 719. Over residues 717–728 the composition is skewed to gly residues; sequence GGSGSGVPGGGP. Residues 796 to 819 are compositionally biased toward pro residues; the sequence is LGPPPPPPPPSLHPFGPFPPPPPT. The segment covering 824–836 has biased composition (polar residues); the sequence is NNTLPHPHSTTRV.

The protein belongs to the type-B carboxylesterase/lipase family. Interacts with neurexins NRXN1, NRXN2 and NRXN3. Interaction with neurexins is mediated by heparan sulfate glycan modification on neurexin. Interacts (via its C-terminus) with DLG4/PSD-95 (via PDZ domain 3). Interacts with PATJ. Interacts with MDGA2. Interacts with GPHN. Interacts with MDGA1. Found in a complex with MAGI2 and IGSF9B, where it interacts with MAGI2 (via WW 1, WW 2 and PDZ 2 domains). Identified in a complex of 720 kDa composed of LHFPL4, NLGN2, GABRA1, GABRB2, GABRG2 and GABRB3. Interacts with LHFPL4; leading to mutual regulation of the protein level and synaptic clustering. Interacts with GABRA1. In terms of tissue distribution, brain and arteries. Detected in the retina outer plexiform layer (at protein level). Widely expressed. Detected in heart, brain, spleen, lung, liver, skeletal muscle, kidney and testis.

The protein localises to the cell membrane. The protein resides in the postsynaptic cell membrane. It localises to the presynaptic cell membrane. Functionally, transmembrane scaffolding protein involved in cell-cell interactions via its interactions with neurexin family members. Mediates cell-cell interactions both in neurons and in other types of cells, such as Langerhans beta cells. Mediates cell-cell interactions between Langerhans beta cells and modulates insulin secretion. Plays a role in synapse function and synaptic signal transmission, especially via gamma-aminobutyric acid receptors (GABA(A) receptors). Functions by recruiting and clustering synaptic proteins. Promotes clustering of postsynaptic GABRG2 and GPHN. Promotes clustering of postsynaptic LHFPL4. Modulates signaling by inhibitory synapses, and thereby plays a role in controlling the ratio of signaling by excitatory and inhibitory synapses and information processing. Required for normal signal amplitude from inhibitory synapses, but is not essential for normal signal frequency. May promote the initial formation of synapses, but is not essential for this. In vitro, triggers the de novo formation of presynaptic structures. The sequence is that of Neuroligin-2 (Nlgn2) from Mus musculus (Mouse).